The primary structure comprises 224 residues: Small ribosomal subunit protein eS1 (224 aa).

Belongs to the eukaryotic ribosomal protein eS1 family.

This Methanococcus maripaludis (strain C7 / ATCC BAA-1331) protein is Small ribosomal subunit protein eS1.